A 128-amino-acid chain; its full sequence is Small ribosomal subunit protein uS11 (128 aa).

Belongs to the universal ribosomal protein uS11 family. In terms of assembly, part of the 30S ribosomal subunit. Interacts with proteins S7 and S18. Binds to IF-3.

Functionally, located on the platform of the 30S subunit, it bridges several disparate RNA helices of the 16S rRNA. Forms part of the Shine-Dalgarno cleft in the 70S ribosome. This Phytoplasma australiense protein is Small ribosomal subunit protein uS11.